A 592-amino-acid chain; its full sequence is Beta-fructofuranosidase, insoluble isoenzyme 1 (592 aa).

An N-terminal signal peptide occupies residues 1-39 (MGVTIRNRNYDHGSLPFLQSLLAILLVTTTTLHINGVEA). A propeptide spanning residues 40–48 (FHEIHYNLQ) is cleaved from the precursor. D74 is an active-site residue. N-linked (GlcNAc...) (complex) asparagine glycosylation is present at N170. A glycan (N-linked (GlcNAc...) asparagine) is linked at N195. N311 carries an N-linked (GlcNAc...) (complex) asparagine glycan. N348 is a glycosylation site (N-linked (GlcNAc...) (high mannose) asparagine). A glycan (N-linked (GlcNAc...) asparagine) is linked at N570.

The protein belongs to the glycosyl hydrolase 32 family. In terms of tissue distribution, in leaves and roots of young plants.

It is found in the secreted. The protein resides in the cell wall. It catalyses the reaction Hydrolysis of terminal non-reducing beta-D-fructofuranoside residues in beta-D-fructofuranosides.. Its function is as follows. May play an important role in phloem unloading and in stress response. This is Beta-fructofuranosidase, insoluble isoenzyme 1 (INV1) from Daucus carota (Wild carrot).